The primary structure comprises 146 residues: Large ribosomal subunit protein uL15 (146 aa).

Residues 1-13 are compositionally biased toward basic and acidic residues; it reads MKLHELKPAEGSR. The interval 1-51 is disordered; that stretch reads MKLHELKPAEGSRKVRNRVGRGIGSGNGKTAGKGHKGQNARSGGGVRLGFE. Composition is skewed to gly residues over residues 21 to 31 and 42 to 51; these read RGIGSGNGKTA and SGGGVRLGFE.

It belongs to the universal ribosomal protein uL15 family. As to quaternary structure, part of the 50S ribosomal subunit.

Functionally, binds to the 23S rRNA. The chain is Large ribosomal subunit protein uL15 from Bacillus cereus (strain G9842).